The sequence spans 215 residues: uncharacterized protein (215 aa).

The tract at residues 120 to 147 (HRAPQGTSSYQEGRRAHEATSAESDDDN) is disordered.

This is an uncharacterized protein from Homo sapiens (Human).